The primary structure comprises 432 residues: Serine--tRNA ligase (432 aa).

L-serine is bound at residue 238–240 (TAE). 269–271 (RSE) is a binding site for ATP. Glu-292 serves as a coordination point for L-serine. Residue 357 to 360 (EISS) participates in ATP binding. Ser-393 contributes to the L-serine binding site.

It belongs to the class-II aminoacyl-tRNA synthetase family. Type-1 seryl-tRNA synthetase subfamily. In terms of assembly, homodimer. The tRNA molecule binds across the dimer.

It is found in the cytoplasm. It carries out the reaction tRNA(Ser) + L-serine + ATP = L-seryl-tRNA(Ser) + AMP + diphosphate + H(+). It catalyses the reaction tRNA(Sec) + L-serine + ATP = L-seryl-tRNA(Sec) + AMP + diphosphate + H(+). The protein operates within aminoacyl-tRNA biosynthesis; selenocysteinyl-tRNA(Sec) biosynthesis; L-seryl-tRNA(Sec) from L-serine and tRNA(Sec): step 1/1. In terms of biological role, catalyzes the attachment of serine to tRNA(Ser). Is also able to aminoacylate tRNA(Sec) with serine, to form the misacylated tRNA L-seryl-tRNA(Sec), which will be further converted into selenocysteinyl-tRNA(Sec). This Hyphomonas neptunium (strain ATCC 15444) protein is Serine--tRNA ligase.